The sequence spans 368 residues: Phosphate acyltransferase (368 aa).

The protein belongs to the PlsX family. As to quaternary structure, homodimer. Probably interacts with PlsY.

It is found in the cytoplasm. It catalyses the reaction a fatty acyl-[ACP] + phosphate = an acyl phosphate + holo-[ACP]. It functions in the pathway lipid metabolism; phospholipid metabolism. Catalyzes the reversible formation of acyl-phosphate (acyl-PO(4)) from acyl-[acyl-carrier-protein] (acyl-ACP). This enzyme utilizes acyl-ACP as fatty acyl donor, but not acyl-CoA. In Herpetosiphon aurantiacus (strain ATCC 23779 / DSM 785 / 114-95), this protein is Phosphate acyltransferase.